The chain runs to 449 residues: MFS-type transporter 1 (449 aa).

Residues 1 to 37 (MTHSSSNEHEKEDDRRASDDMMDRDDQNAKEEQDVSK) are compositionally biased toward basic and acidic residues. Residues 1–43 (MTHSSSNEHEKEDDRRASDDMMDRDDQNAKEEQDVSKDAPPVN) are disordered. A run of 6 helical transmembrane segments spans residues 61-81 (VAGG…IGIF), 97-117 (TISW…LVVG), 127-147 (YILL…SLST), 152-172 (ILLS…TPAV), 185-205 (LANG…PIMF), and 212-232 (VGFP…LIIA). Residue asparagine 233 is glycosylated (N-linked (GlcNAc...) asparagine). The next 6 membrane-spanning stretches (helical) occupy residues 262–282 (LLTT…INYI), 298–318 (YLIP…GFVA), 326–346 (VHTF…LPAA), 349–369 (APII…VAIL), 390–410 (FGVL…FVAH), and 420–440 (IWTG…RISL).

It belongs to the major facilitator superfamily. Monocarboxylate porter (TC 2.A.1.13) family.

The protein resides in the cell membrane. It carries out the reaction erythrostominone(in) = erythrostominone(out). The catalysed reaction is deoxyerythrostominone(in) = deoxyerythrostominone(out). The enzyme catalyses epierythrostominol(in) = epierythrostominol(out). It catalyses the reaction deoxyerythrostominol(in) = deoxyerythrostominol(out). Its function is as follows. MFS-type transporter that mediates the secretion of the 4 major naphthoquinone derivatives produced, erythrostominone (NQ1), deoxyerythrostominone (NQ2), epierythrostominol (NQ4), and deoxyerythrostominol (NQ5), as well as of 3 newly identified naphthoquinone derivatives termed NQ7, NQ8 and NQ9. The protein is MFS-type transporter 1 of Ophiocordyceps sp. (strain BCC 1869) (Entomopathogenic fungus).